The sequence spans 213 residues: Probable anti-sigma-F factor NrsF (213 aa).

A run of 6 helical transmembrane segments spans residues 27 to 47, 51 to 71, 91 to 111, 126 to 146, 159 to 179, and 187 to 207; these read ALAIGWGAAGATLLMLALLQV, LGLALLLPMFWVKVGFVTCLA, VPAALGLPVLGMWAIAAFTLI, TWKSCPLLIAMLSVPVFAAVL, LAGFAAGLLAGAVAAVVYCLH, and FIGFWYLLGMLIPAAVGVLLG.

The protein belongs to the NrsF anti-sigma-F factor family.

It localises to the cell inner membrane. Functionally, probably an anti-sigma factor for extracytoplasmic function (ECF) sigma factor sigma-F (SigF), which responds to (hypo)chlorite. ECF sigma factors are held in an inactive form by a cognate anti-sigma factor. The sequence is that of Probable anti-sigma-F factor NrsF from Azospira oryzae (strain ATCC BAA-33 / DSM 13638 / PS) (Dechlorosoma suillum).